We begin with the raw amino-acid sequence, 300 residues long: Large ribosomal subunit protein bL9m (300 aa).

The protein belongs to the bacterial ribosomal protein bL9 family. In terms of assembly, component of the mitochondrial large ribosomal subunit (mt-LSU). Mature N.crassa 74S mitochondrial ribosomes consist of a small (37S) and a large (54S) subunit. The 37S small subunit contains a 16S ribosomal RNA (16S mt-rRNA) and 32 different proteins. The 54S large subunit contains a 23S rRNA (23S mt-rRNA) and 42 different proteins.

It is found in the mitochondrion. In terms of biological role, component of the mitochondrial ribosome (mitoribosome), a dedicated translation machinery responsible for the synthesis of mitochondrial genome-encoded proteins, including at least some of the essential transmembrane subunits of the mitochondrial respiratory chain. The mitoribosomes are attached to the mitochondrial inner membrane and translation products are cotranslationally integrated into the membrane. The protein is Large ribosomal subunit protein bL9m (mrpl50) of Neurospora crassa (strain ATCC 24698 / 74-OR23-1A / CBS 708.71 / DSM 1257 / FGSC 987).